We begin with the raw amino-acid sequence, 352 residues long: 3-isopropylmalate dehydrogenase (352 aa).

76-89 contacts NAD(+); the sequence is GPKWENLPHEHKPE. Substrate-binding residues include Arg96, Arg106, Arg134, and Asp219. Asp219, Asp243, and Asp247 together coordinate Mg(2+). Residue 276–288 coordinates NAD(+); that stretch reads GSAPDIAGQNKAN.

Belongs to the isocitrate and isopropylmalate dehydrogenases family. LeuB type 1 subfamily. As to quaternary structure, homodimer. The cofactor is Mg(2+). It depends on Mn(2+) as a cofactor.

Its subcellular location is the cytoplasm. The catalysed reaction is (2R,3S)-3-isopropylmalate + NAD(+) = 4-methyl-2-oxopentanoate + CO2 + NADH. It participates in amino-acid biosynthesis; L-leucine biosynthesis; L-leucine from 3-methyl-2-oxobutanoate: step 3/4. Its function is as follows. Catalyzes the oxidation of 3-carboxy-2-hydroxy-4-methylpentanoate (3-isopropylmalate) to 3-carboxy-4-methyl-2-oxopentanoate. The product decarboxylates to 4-methyl-2 oxopentanoate. The polypeptide is 3-isopropylmalate dehydrogenase (Chlorobium chlorochromatii (strain CaD3)).